A 302-amino-acid chain; its full sequence is Deubiquitinase OTUD6B (302 aa).

Positions 1 to 10 (MEGSEDEEAE) are enriched in acidic residues. Disordered regions lie at residues 1-52 (MEGS…KQLA) and 99-121 (EQQI…AALE). The segment covering 106 to 116 (RISKAQKRREK) has biased composition (basic residues). Positions 156 to 293 (LEIKQIPSDG…GEHYNSVKLL (138 aa)) constitute an OTU domain. The tract at residues 161 to 167 (IPSDGHC) is cys-loop. Residue Asp164 is part of the active site. Cys167 (nucleophile) is an active-site residue. Positions 228 to 238 (IANTAAWGGQL) are variable-loop. Residues 276 to 286 (YMRHAYGLGEH) form a his-loop region. The active site involves His286.

It carries out the reaction Thiol-dependent hydrolysis of ester, thioester, amide, peptide and isopeptide bonds formed by the C-terminal Gly of ubiquitin (a 76-residue protein attached to proteins as an intracellular targeting signal).. Functionally, deubiquitinating enzyme that may play a role in the ubiquitin-dependent regulation of different cellular processes. The sequence is that of Deubiquitinase OTUD6B (OTUD6B) from Gallus gallus (Chicken).